A 474-amino-acid chain; its full sequence is Transcription termination factor Rho (474 aa).

A disordered region spans residues 1 to 60 (MTEELDNTPSPAGDIPQETLPKPLPAPEETAGEQPAAAPEENRGNAVREEEEAAPVLEQI). A Rho RNA-BD domain is found at 107 to 182 (EVVVSGVMEQ…ASVISVEDIP (76 aa)). Residues 226–231 (GKGQRG), 238–243 (RGGKTV), and R269 each bind ATP.

Belongs to the Rho family. In terms of assembly, homohexamer. The homohexamer assembles into an open ring structure.

In terms of biological role, facilitates transcription termination by a mechanism that involves Rho binding to the nascent RNA, activation of Rho's RNA-dependent ATPase activity, and release of the mRNA from the DNA template. This Akkermansia muciniphila (strain ATCC BAA-835 / DSM 22959 / JCM 33894 / BCRC 81048 / CCUG 64013 / CIP 107961 / Muc) protein is Transcription termination factor Rho.